A 1117-amino-acid polypeptide reads, in one-letter code: DNA polymerase (1117 aa).

The segment at 591–621 is disordered; it reads ESSPVASFEEDSEQTSDSSLGEVSSQGSSDG. The segment covering 606 to 618 has biased composition (low complexity); sequence SDSSLGEVSSQGS.

It belongs to the DNA polymerase type-B family.

It is found in the host nucleus. It catalyses the reaction DNA(n) + a 2'-deoxyribonucleoside 5'-triphosphate = DNA(n+1) + diphosphate. In Cavia porcellus (Guinea pig), this protein is DNA polymerase.